A 167-amino-acid chain; its full sequence is SsrA-binding protein (167 aa).

Belongs to the SmpB family.

The protein localises to the cytoplasm. In terms of biological role, required for rescue of stalled ribosomes mediated by trans-translation. Binds to transfer-messenger RNA (tmRNA), required for stable association of tmRNA with ribosomes. tmRNA and SmpB together mimic tRNA shape, replacing the anticodon stem-loop with SmpB. tmRNA is encoded by the ssrA gene; the 2 termini fold to resemble tRNA(Ala) and it encodes a 'tag peptide', a short internal open reading frame. During trans-translation Ala-aminoacylated tmRNA acts like a tRNA, entering the A-site of stalled ribosomes, displacing the stalled mRNA. The ribosome then switches to translate the ORF on the tmRNA; the nascent peptide is terminated with the 'tag peptide' encoded by the tmRNA and targeted for degradation. The ribosome is freed to recommence translation, which seems to be the essential function of trans-translation. This chain is SsrA-binding protein, found in Stenotrophomonas maltophilia (strain K279a).